A 200-amino-acid polypeptide reads, in one-letter code: Imidazole glycerol phosphate synthase subunit HisH (200 aa).

The Glutamine amidotransferase type-1 domain maps to 3–200 (EVALIDAGGA…LRNFLEMDAA (198 aa)). Cysteine 78 functions as the Nucleophile in the catalytic mechanism. Residues histidine 179 and glutamate 181 contribute to the active site.

As to quaternary structure, heterodimer of HisH and HisF.

Its subcellular location is the cytoplasm. The enzyme catalyses 5-[(5-phospho-1-deoxy-D-ribulos-1-ylimino)methylamino]-1-(5-phospho-beta-D-ribosyl)imidazole-4-carboxamide + L-glutamine = D-erythro-1-(imidazol-4-yl)glycerol 3-phosphate + 5-amino-1-(5-phospho-beta-D-ribosyl)imidazole-4-carboxamide + L-glutamate + H(+). It catalyses the reaction L-glutamine + H2O = L-glutamate + NH4(+). Its pathway is amino-acid biosynthesis; L-histidine biosynthesis; L-histidine from 5-phospho-alpha-D-ribose 1-diphosphate: step 5/9. In terms of biological role, IGPS catalyzes the conversion of PRFAR and glutamine to IGP, AICAR and glutamate. The HisH subunit catalyzes the hydrolysis of glutamine to glutamate and ammonia as part of the synthesis of IGP and AICAR. The resulting ammonia molecule is channeled to the active site of HisF. The chain is Imidazole glycerol phosphate synthase subunit HisH from Xylella fastidiosa (strain Temecula1 / ATCC 700964).